A 374-amino-acid polypeptide reads, in one-letter code: Phosphatidyl-myo-inositol mannosyltransferase (374 aa).

GDP-alpha-D-mannose-binding residues include Tyr9 and Gly16. Residues Gln18, 62 to 63 (YN), and Arg68 contribute to the a 1,2-diacyl-sn-glycero-3-phospho-(1D-myo-inositol) site. Residues Arg196, 201 to 202 (RK), 251 to 253 (VDD), Lys256, 274 to 278 (ESFGI), and Glu282 each bind GDP-alpha-D-mannose.

This sequence belongs to the glycosyltransferase group 1 family. Glycosyltransferase 4 subfamily. As to quaternary structure, monomer. Requires Mg(2+) as cofactor.

Its subcellular location is the cell membrane. It catalyses the reaction a 1,2-diacyl-sn-glycero-3-phospho-(1D-myo-inositol) + GDP-alpha-D-mannose = a 1,2-diacyl-sn-glycero-3-phospho-[alpha-D-mannopyranosyl-(1&lt;-&gt;6)-D-myo-inositol] + GDP + H(+). The protein operates within phospholipid metabolism; phosphatidylinositol metabolism. Its function is as follows. Involved in the biosynthesis of phosphatidyl-myo-inositol mannosides (PIM) which are early precursors in the biosynthesis of lipomannans (LM) and lipoarabinomannans (LAM). Catalyzes the addition of a mannosyl residue from GDP-D-mannose (GDP-Man) to the position 2 of the carrier lipid phosphatidyl-myo-inositol (PI) to generate a phosphatidyl-myo-inositol bearing an alpha-1,2-linked mannose residue (PIM1). The polypeptide is Phosphatidyl-myo-inositol mannosyltransferase (Mycobacterium leprae (strain TN)).